A 460-amino-acid chain; its full sequence is MIKGSSLKRFKSLVMAAIFSVSIISTAIASSAADQIPFPYDAKYPNGAYSCLADSQSIGNNLVRSEWEQWKSAHITSNGARGYKRVQRDASTNYDTVSEGLGYGLLLSVYFGEQQLFDDLYRYVKVFLNSNGLMSWRIDSSGNIMGKDSIGAATDADEDIAVSLVFAHKKWGTSGGFNYQTEAKNYINNIYNKMVEPGTYVIKAGDTWGGSNVTNPSYFAPAWYRIFADFTGNSGWINVANKCYEIADKARNSNTGLVPDWCTANGTPASGQGFDFYYDAIRYQWRAAIDYSWYGTAKAKTHCDAISNFFKNIGYANIKDGYTISGSQISSNHTATFVSCAAAAAMTGTDTTYAKNIYNECVKVKDSGNYTYFGNTLRMMVLLYTTGNFPNLYTYNSQPKPDLKGDVNNDGAIDALDIAALKKAILTQTTSNISLTNADMNNDGNIDAIDFAQLKVKLLN.

Positions 1 to 32 (MIKGSSLKRFKSLVMAAIFSVSIISTAIASSA) are cleaved as a signal peptide. Glutamate 99 serves as the catalytic Proton donor. Aspartate 155 functions as the Nucleophile in the catalytic mechanism. Positions 400-460 (KPDLKGDVNN…FAQLKVKLLN (61 aa)) constitute a Dockerin domain.

This sequence belongs to the glycosyl hydrolase 8 (cellulase D) family. Monomer. Post-translationally, there are two forms of the cellulase. The shorter form lacks probably the C-terminal reiterated domains.

The enzyme catalyses Endohydrolysis of (1-&gt;4)-beta-D-glucosidic linkages in cellulose, lichenin and cereal beta-D-glucans.. Its pathway is glycan metabolism; cellulose degradation. In terms of biological role, the biological conversion of cellulose to glucose generally requires three types of hydrolytic enzymes: (1) Endoglucanases which cut internal beta-1,4-glucosidic bonds; (2) Exocellobiohydrolases that cut the disaccharide cellobiose from the non-reducing end of the cellulose polymer chain; (3) Beta-1,4-glucosidases which hydrolyze the cellobiose and other short cello-oligosaccharides to glucose. The chain is Endoglucanase C (celCCC) from Ruminiclostridium cellulolyticum (strain ATCC 35319 / DSM 5812 / JCM 6584 / H10) (Clostridium cellulolyticum).